The following is a 232-amino-acid chain: Rho-related GTP-binding protein Rho6 (232 aa).

GTP contacts are provided by residues 23-28, 38-45, 67-71, 125-128, and 169-170; these read QCGKTA, YPETYVPT, DTSGS, CKTD, and AF. An Effector region motif is present at residues 42–50; that stretch reads YVPTVFENY. Cys-229 carries the cysteine methyl ester modification. Cys-229 is lipidated: S-geranylgeranyl cysteine. Positions 230 to 232 are cleaved as a propeptide — removed in mature form; sequence SIM.

It belongs to the small GTPase superfamily. Rho family. In terms of assembly, binds GRB7 and PLXNB1. Interacts with PLXNA2. Interacts with UBXD5.

The protein localises to the cell membrane. It localises to the cytoplasm. It is found in the cytoskeleton. Lacks intrinsic GTPase activity. Has a low affinity for GDP, and constitutively binds GTP. Controls rearrangements of the actin cytoskeleton. Induces the Rac-dependent neuritic process formation in part by disruption of the cortical actin filaments. Causes the formation of many neuritic processes from the cell body with disruption of the cortical actin filaments. In Bos taurus (Bovine), this protein is Rho-related GTP-binding protein Rho6 (RND1).